A 225-amino-acid polypeptide reads, in one-letter code: PKHD-type hydroxylase YbiX (225 aa).

In terms of domain architecture, Fe2OG dioxygenase spans 78-177 (TLSTPLFNRY…RVASFMWIQS (100 aa)). Fe cation contacts are provided by H96, D98, and H158. Residue R168 coordinates 2-oxoglutarate.

Fe(2+) is required as a cofactor. It depends on L-ascorbate as a cofactor.

This chain is PKHD-type hydroxylase YbiX, found in Escherichia coli O8 (strain IAI1).